We begin with the raw amino-acid sequence, 497 residues long: Casein kinase I isoform delta (497 aa).

2 disordered regions span residues methionine 1–asparagine 58 and proline 86–glutamine 109. A compositionally biased stretch (polar residues) spans tryptophan 14 to proline 34. The segment covering glutamine 88–proline 105 has biased composition (low complexity). In terms of domain architecture, Protein kinase spans phenylalanine 191 to phenylalanine 458. Residues isoleucine 197–isoleucine 205 and lysine 220 contribute to the ATP site. The active-site Proton acceptor is aspartate 310.

Belongs to the protein kinase superfamily. CK1 Ser/Thr protein kinase family. Casein kinase I subfamily. As to quaternary structure, monomer. As to expression, expressed throughout larval development and into the adult stage in both hypodermal seam cells and the hermaphrodite specific neuron.

The protein resides in the cytoplasm. It is found in the nucleus. Its subcellular location is the chromosome. It localises to the centromere. The protein localises to the cell junction. The protein resides in the adherens junction. It carries out the reaction L-seryl-[protein] + ATP = O-phospho-L-seryl-[protein] + ADP + H(+). The catalysed reaction is L-threonyl-[protein] + ATP = O-phospho-L-threonyl-[protein] + ADP + H(+). Exhibits substrate-dependent heparin activation. Essential serine/threonine-protein kinase that regulates diverse cellular growth and survival processes including Wnt signaling, DNA repair and circadian rhythms. Casein kinases are operationally defined by their preferential utilization of acidic proteins. Positively regulates the expression of components of the heterochronic pathway, which regulate developmental timing, such as the transcriptional repressor lin-42 and microRNAs such as let-7. Negatively regulates cell cycle exit and cell fusion to prevent the premature differentiation of hypodermal seam cells into adult cells. Plays a role in regulating axon branching and subsequently, the maturation of the nervous system, most likely by preventing the premature termination of transcripts for proteins such as Ankyrin/unc-44, which are required for maintaining the nervous system. May phosphorylate ssup-72 to promote nervous system maturation. The protein is Casein kinase I isoform delta of Caenorhabditis elegans.